A 208-amino-acid polypeptide reads, in one-letter code: Thymidylate kinase (208 aa).

10-17 (GIDGSGKS) provides a ligand contact to ATP.

The protein belongs to the thymidylate kinase family.

The enzyme catalyses dTMP + ATP = dTDP + ADP. Its function is as follows. Phosphorylation of dTMP to form dTDP in both de novo and salvage pathways of dTTP synthesis. The protein is Thymidylate kinase of Jannaschia sp. (strain CCS1).